The primary structure comprises 578 residues: Arginine--tRNA ligase (578 aa).

The short motif at 127 to 137 (PNLAKEMHVGH) is the 'HIGH' region element.

It belongs to the class-I aminoacyl-tRNA synthetase family. In terms of assembly, monomer.

Its subcellular location is the cytoplasm. The enzyme catalyses tRNA(Arg) + L-arginine + ATP = L-arginyl-tRNA(Arg) + AMP + diphosphate. This chain is Arginine--tRNA ligase, found in Pseudomonas fluorescens (strain SBW25).